The chain runs to 241 residues: RecQ-mediated genome instability protein 1 (241 aa).

It belongs to the RMI1 family. In terms of assembly, forms a complex with SGS1 and TOP3.

Its subcellular location is the cytoplasm. The protein localises to the nucleus. Structure-specific DNA-binding protein with a preference for cruciform structures. Also binds single-stranded DNA (ssDNA). Functions together with SGS1 and TOP3 to maintain genome integrity. Essential for proper meiotic cell division. Required for normal S-phase progression and DNA damage response. Required for resistance to the DNA-damaging agent methyl methanesulfonate (MMS). This is RecQ-mediated genome instability protein 1 from Saccharomyces cerevisiae (strain ATCC 204508 / S288c) (Baker's yeast).